Here is a 385-residue protein sequence, read N- to C-terminus: Deoxyguanosinetriphosphate triphosphohydrolase-like protein (385 aa).

The region spanning 75-197 (RLTHTLEVGQ…VDAADALAYT (123 aa)) is the HD domain.

Belongs to the dGTPase family. Type 2 subfamily.

In Deinococcus geothermalis (strain DSM 11300 / CIP 105573 / AG-3a), this protein is Deoxyguanosinetriphosphate triphosphohydrolase-like protein.